A 706-amino-acid chain; its full sequence is Forkhead box protein P2 (706 aa).

Residues 1-28 (MMQESATETISNSSMNQNGMSTLSSQLD) show a composition bias toward polar residues. 2 disordered regions span residues 1 to 45 (MMQE…SEVS) and 275 to 305 (IKHG…ITHH). Over residues 287–296 (SSSTTSTTTS) the composition is skewed to low complexity. The C2H2-type zinc finger occupies 337–362 (GVCKWPGCENICEDFGQFLKHLNNEH). Residues 379 to 400 (VQQLEIQLSKERERLQAMMTHL) are leucine-zipper. A ctbp1-binding region spans residues 413 to 417 (PLNLV). Residues 495–585 (RPPFTYATLI…SQKITASPTL (91 aa)) constitute a DNA-binding region (fork-head). The interval 672 to 706 (DDEDCPMSLVTTANHSPELEEDRELEEEPLSEDLE) is disordered. A compositionally biased stretch (acidic residues) spans 690-706 (LEEDRELEEEPLSEDLE).

Dimerization is required for DNA-binding. At stage 15, expressed in the anterior/superior eye field and the caudal branchial arch. At later stages, expression persists in the retina and in the caudal branchial arch. Expressed in the pronephros and the tip of the tail. Beginning with stage 35, expression in the brain is localized to distinct subdomains of the anterior prosencephalon, the medial mesencephalon and to lateral domains of the hindbrain.

It is found in the nucleus. Functionally, transcriptional repressor. The protein is Forkhead box protein P2 of Xenopus laevis (African clawed frog).